The chain runs to 169 residues: Endoribonuclease YbeY (169 aa).

3 residues coordinate Zn(2+): histidine 130, histidine 134, and histidine 140.

The protein belongs to the endoribonuclease YbeY family. It depends on Zn(2+) as a cofactor.

Its subcellular location is the cytoplasm. In terms of biological role, single strand-specific metallo-endoribonuclease involved in late-stage 70S ribosome quality control and in maturation of the 3' terminus of the 16S rRNA. The sequence is that of Endoribonuclease YbeY from Neisseria meningitidis serogroup B (strain ATCC BAA-335 / MC58).